Here is a 65-residue protein sequence, read N- to C-terminus: VESP-VB2 (65 aa).

An N-terminal signal peptide occupies residues 1–23 (MKMSILFLFALIASLACLQLTFA). 7 AXPX repeats span residues 23 to 26 (AAPA), 27 to 30 (ASPF), 31 to 34 (ANPG), 35 to 38 (ASPE), 39 to 42 (AAPL), 43 to 46 (ADPL), and 47 to 50 (ADPF). The propeptide occupies 24–49 (APAASPFANPGASPEAAPLADPLADP). A Leucine amide modification is found at Leu62.

This sequence belongs to the MCD family. Mastoparan subfamily. As to expression, expressed by the venom gland.

The protein localises to the secreted. Its function is as follows. Antimicrobial peptide. Shows activity against both Gram-positive and -negative bacteria, as well against fungi. Also promotes important mast cell degranulation. Shows little hemolytic activity on rabbit and human erythrocytes. Its mast cell degranulation activity may be related to the activation of G-protein coupled receptors in mast cells as well as interaction with other proteins located in cell endosomal membranes in the mast cells. The protein is VESP-VB2 of Vespa bicolor (Black shield wasp).